The primary structure comprises 758 residues: 5-methyltetrahydropteroyltriglutamate--homocysteine methyltransferase (758 aa).

Residues 16 to 19 (RELK) and lysine 116 contribute to the 5-methyltetrahydropteroyltri-L-glutamate site. Residues 436–438 (IGS) and glutamate 489 contribute to the L-homocysteine site. L-methionine is bound by residues 436-438 (IGS) and glutamate 489. Residues 520–521 (RC) and tryptophan 566 each bind 5-methyltetrahydropteroyltri-L-glutamate. L-homocysteine is bound at residue aspartate 604. Aspartate 604 is a binding site for L-methionine. Position 610 (glutamate 610) interacts with 5-methyltetrahydropteroyltri-L-glutamate. The Zn(2+) site is built by histidine 646, cysteine 648, and glutamate 670. The active-site Proton donor is histidine 699. Cysteine 731 serves as a coordination point for Zn(2+).

The protein belongs to the vitamin-B12 independent methionine synthase family. Zn(2+) serves as cofactor.

It catalyses the reaction 5-methyltetrahydropteroyltri-L-glutamate + L-homocysteine = tetrahydropteroyltri-L-glutamate + L-methionine. The protein operates within amino-acid biosynthesis; L-methionine biosynthesis via de novo pathway; L-methionine from L-homocysteine (MetE route): step 1/1. Catalyzes the transfer of a methyl group from 5-methyltetrahydrofolate to homocysteine resulting in methionine formation. This chain is 5-methyltetrahydropteroyltriglutamate--homocysteine methyltransferase, found in Xylella fastidiosa (strain M23).